Consider the following 434-residue polypeptide: Glycerol-3-phosphate acyltransferase 3 (434 aa).

The chain crosses the membrane as a helical span at residues 14-34 (WLTLVLGFILLPSVFGVSLGI). Phosphoserine occurs at positions 68 and 77. Helical transmembrane passes span 137–157 (ISLR…CVLL) and 161–181 (VTLA…VGQL). An HXXXXD motif motif is present at residues 229–234 (HTSPID).

It belongs to the 1-acyl-sn-glycerol-3-phosphate acyltransferase family. As to expression, widely expressed. Expressed in liver, kidney, testis, brain, heart, skeletal muscle, thyroid, prostate, thymus and placenta. Also expressed lung and adipose tissue.

It localises to the endoplasmic reticulum membrane. The catalysed reaction is sn-glycerol 3-phosphate + an acyl-CoA = a 1-acyl-sn-glycero-3-phosphate + CoA. It carries out the reaction a 1-acyl-sn-glycero-3-phosphate + an acyl-CoA = a 1,2-diacyl-sn-glycero-3-phosphate + CoA. The enzyme catalyses dodecanoyl-CoA + sn-glycerol 3-phosphate = 1-dodecanoyl-sn-glycerol 3-phosphate + CoA. It catalyses the reaction sn-glycerol 3-phosphate + hexadecanoyl-CoA = 1-hexadecanoyl-sn-glycero-3-phosphate + CoA. The catalysed reaction is sn-glycerol 3-phosphate + (9Z)-octadecenoyl-CoA = 1-(9Z-octadecenoyl)-sn-glycero-3-phosphate + CoA. It carries out the reaction (9Z,12Z)-octadecadienoyl-CoA + sn-glycerol 3-phosphate = 1-(9Z,12Z)-octadecadienoyl-sn-glycero-3-phosphate + CoA. The enzyme catalyses 1-tetradecanoyl-sn-glycerol 3-phosphate + (9Z)-octadecenoyl-CoA = 1-tetradecanoyl-2-(9Z)-octadecenoyl-sn-glycero-3-phosphate + CoA. It catalyses the reaction 1-hexadecanoyl-sn-glycero-3-phosphate + (9Z)-octadecenoyl-CoA = 1-hexadecanoyl-2-(9Z-octadecenoyl)-sn-glycero-3-phosphate + CoA. The catalysed reaction is 1-(9Z-octadecenoyl)-sn-glycero-3-phosphate + (9Z)-octadecenoyl-CoA = 1,2-di-(9Z-octadecenoyl)-sn-glycero-3-phosphate + CoA. It carries out the reaction 1-(6Z,9Z,12Z-octadecatrienoyl)-sn-glycero-3-phosphate + (9Z)-octadecenoyl-CoA = (6Z,9Z,12Z)-octadecatrienoyl-2-(9Z)-octadecenoyl-sn-glycero-3-phosphate + CoA. The enzyme catalyses 1-(9Z,12Z,15Z)-octadecatrienoyl-sn-glycero-3-phosphate + (9Z)-octadecenoyl-CoA = 1-(9Z,12Z,15Z)-octadecatrienoyl-2-(9Z)-octadecenoyl-sn-glycero-3-phosphate + CoA. It catalyses the reaction 1-(9Z-octadecenoyl)-sn-glycero-3-phosphate + tetradecanoyl-CoA = 1-(9Z)-octadecenoyl-2-tetradecanoyl-sn-glycero-3-phosphate + CoA. The catalysed reaction is 1-(9Z-octadecenoyl)-sn-glycero-3-phosphate + hexadecanoyl-CoA = 1-(9Z)-octadecenoyl-2-hexadecanoyl-sn-glycero-3-phosphate + CoA. It carries out the reaction 1-(9Z-octadecenoyl)-sn-glycero-3-phosphate + octadecanoyl-CoA = 1-(9Z-octadecenoyl)-2-octadecanoyl-sn-glycero-3-phosphate + CoA. The enzyme catalyses 1-(9Z-octadecenoyl)-sn-glycero-3-phosphate + (9Z,12Z)-octadecadienoyl-CoA = 1-(9Z)-octadecenoyl-2-(9Z,12Z)-octadecadienoyl-sn-glycero-3-phosphate + CoA. It catalyses the reaction 1-(5Z,8Z,11Z,14Z-eicosatetraenoyl)-sn-glycero-3-phosphate + (9Z)-octadecenoyl-CoA = 1-(5Z,8Z,11Z,14Z)-eicosatetraenoyl-2-(9Z)-octadecenoyl-sn-glycero-3-phosphate + CoA. It participates in glycerolipid metabolism; triacylglycerol biosynthesis. Its pathway is phospholipid metabolism; CDP-diacylglycerol biosynthesis; CDP-diacylglycerol from sn-glycerol 3-phosphate: step 1/3. Inhibited by N-ethylmaleimide (NEM). Functionally, converts glycerol-3-phosphate to 1-acyl-sn-glycerol-3-phosphate (lysophosphatidic acid or LPA) by incorporating an acyl moiety at the sn-1 position of the glycerol backbone. Also converts LPA into 1,2-diacyl-sn-glycerol-3-phosphate (phosphatidic acid or PA) by incorporating an acyl moiety at the sn-2 position of the glycerol backbone. Protects cells against lipotoxicity. The protein is Glycerol-3-phosphate acyltransferase 3 of Homo sapiens (Human).